The primary structure comprises 173 residues: Large ribosomal subunit protein uL10 (173 aa).

The protein belongs to the universal ribosomal protein uL10 family. In terms of assembly, part of the ribosomal stalk of the 50S ribosomal subunit. The N-terminus interacts with L11 and the large rRNA to form the base of the stalk. The C-terminus forms an elongated spine to which L12 dimers bind in a sequential fashion forming a multimeric L10(L12)X complex.

Its function is as follows. Forms part of the ribosomal stalk, playing a central role in the interaction of the ribosome with GTP-bound translation factors. In Corynebacterium aurimucosum (strain ATCC 700975 / DSM 44827 / CIP 107346 / CN-1) (Corynebacterium nigricans), this protein is Large ribosomal subunit protein uL10.